We begin with the raw amino-acid sequence, 430 residues long: Acetyl-CoA acetyltransferase FG05087, mitochondrial (430 aa).

The N-terminal 32 residues, 1-32 (MTVTQLRSAGRLAQLAGHVNGARQFSTRPALR), are a transit peptide targeting the mitochondrion. The active-site Acyl-thioester intermediate is C122. Residue Y217 participates in K(+) binding. CoA is bound at residue K260. A278 contributes to the K(+) binding site. S282 contacts CoA. Active-site proton acceptor residues include H385 and C413. N414 provides a ligand contact to chloride.

This sequence belongs to the thiolase-like superfamily. Thiolase family. In terms of assembly, homotetramer. It depends on K(+) as a cofactor.

The protein resides in the mitochondrion. It carries out the reaction 2 acetyl-CoA = acetoacetyl-CoA + CoA. In terms of biological role, mitochondrial acetyl-CoA acetyltransferase that catalyzes both the formation and degradation of acetoacetyl-CoA. Seems not to be involved in ergosterol biosynthesis. Plays an important role in growth, morphogenesis and maintaining mitochondrial function including the response to oxidative stresses. This is Acetyl-CoA acetyltransferase FG05087, mitochondrial from Gibberella zeae (strain ATCC MYA-4620 / CBS 123657 / FGSC 9075 / NRRL 31084 / PH-1) (Wheat head blight fungus).